We begin with the raw amino-acid sequence, 78 residues long: Gas vesicle protein A (78 aa).

This sequence belongs to the gas vesicle GvpA family. As to quaternary structure, the gas vesicle shell is 2 nm thick and consists of a single layer of this protein. It forms helical ribs nearly perpendicular to the long axis of the vesicle.

The protein resides in the gas vesicle shell. Its function is as follows. Gas vesicles are hollow, gas filled proteinaceous nanostructures found in some microorganisms. During planktonic growth they allow positioning of the organism at a favorable depth for light or nutrient acquisition. GvpA forms the protein shell. This is Gas vesicle protein A from Halorubrum vacuolatum (Natronobacterium vacuolatum).